Here is a 156-residue protein sequence, read N- to C-terminus: Small ribosomal subunit protein uS7c (156 aa).

The protein belongs to the universal ribosomal protein uS7 family. Part of the 30S ribosomal subunit.

Its subcellular location is the plastid. The protein localises to the chloroplast. In terms of biological role, one of the primary rRNA binding proteins, it binds directly to 16S rRNA where it nucleates assembly of the head domain of the 30S subunit. The protein is Small ribosomal subunit protein uS7c (rps7) of Ostreococcus tauri.